A 534-amino-acid chain; its full sequence is NAD(P)H-quinone oxidoreductase chain 4 (534 aa).

The next 14 helical transmembrane spans lie at 6–26, 38–58, 91–111, 117–137, 138–158, 171–191, 214–234, 245–265, 279–299, 316–336, 337–357, 377–399, 419–439, and 466–486; these read FPWLSTLIFFPIMATVALPFI, WYALVIGLIDFVLLIYAFYTQ, MPLILLTGFITSLAILASWPV, LFYFLILAMYGGQIAVFAVQD, LLVFFLVWELELVPVYLLLSI, FILYTAISSLFILVAALAMAF, LLCYTGFLVAFAVKLPIVPLH, TAPVHMLLAGILLKMGGYALI, FAPALIILGVVNIIYAALTSF, MGFVLIGIASFTDLGMSGAVL, QMVSHGLIGASLFFLVGATYD, IFAMFTTCSMASLALPGMSGFVA, VPVVILAGIGVILTPIYLLSM, and IFVIACLLVPIIGIGLYPKII.

Belongs to the complex I subunit 4 family.

It localises to the cellular thylakoid membrane. The enzyme catalyses a plastoquinone + NADH + (n+1) H(+)(in) = a plastoquinol + NAD(+) + n H(+)(out). It catalyses the reaction a plastoquinone + NADPH + (n+1) H(+)(in) = a plastoquinol + NADP(+) + n H(+)(out). NDH-1 shuttles electrons from NAD(P)H, via FMN and iron-sulfur (Fe-S) centers, to quinones in the respiratory chain. The immediate electron acceptor for the enzyme in this species is believed to be plastoquinone. Couples the redox reaction to proton translocation (for every two electrons transferred, four hydrogen ions are translocated across the cytoplasmic membrane), and thus conserves the redox energy in a proton gradient. The chain is NAD(P)H-quinone oxidoreductase chain 4 from Acaryochloris marina (strain MBIC 11017).